The following is a 357-amino-acid chain: Mitochondrial carrier protein LEU5 (357 aa).

6 helical membrane-spanning segments follow: residues D31–A47, L103–I119, L136–L153, V208–L228, I269–F285, and G325–V347. 3 Solcar repeats span residues D31–T122, E130–V231, and L262–N354.

The protein belongs to the mitochondrial carrier (TC 2.A.29) family.

It is found in the mitochondrion inner membrane. Functionally, required for the accumulation of coenzyme A in the mitochondrial matrix. The protein is Mitochondrial carrier protein LEU5 (LEU5) of Saccharomyces cerevisiae (strain ATCC 204508 / S288c) (Baker's yeast).